A 75-amino-acid polypeptide reads, in one-letter code: Small ribosomal subunit protein bS18 (75 aa).

It belongs to the bacterial ribosomal protein bS18 family. As to quaternary structure, part of the 30S ribosomal subunit. Forms a tight heterodimer with protein bS6.

Functionally, binds as a heterodimer with protein bS6 to the central domain of the 16S rRNA, where it helps stabilize the platform of the 30S subunit. The sequence is that of Small ribosomal subunit protein bS18 from Vibrio atlanticus (strain LGP32) (Vibrio splendidus (strain Mel32)).